The sequence spans 117 residues: MIAFTPSAGLRSLKVASVLKRALAQLFIREFYDLSSMLSISGVKVSEDTRNATVFVAIGDKSVDGDEVVAALNDASNSIRRAVFRYLKLRYVPRLHFKLDVEFDNFLRISEIMATTK.

The protein belongs to the RbfA family. Monomer. Binds 30S ribosomal subunits, but not 50S ribosomal subunits or 70S ribosomes.

The protein resides in the cytoplasm. One of several proteins that assist in the late maturation steps of the functional core of the 30S ribosomal subunit. Associates with free 30S ribosomal subunits (but not with 30S subunits that are part of 70S ribosomes or polysomes). Required for efficient processing of 16S rRNA. May interact with the 5'-terminal helix region of 16S rRNA. This is Ribosome-binding factor A from Anaplasma marginale (strain St. Maries).